The chain runs to 222 residues: UPF0502 protein Shewmr7_1629 (222 aa).

This sequence belongs to the UPF0502 family.

The chain is UPF0502 protein Shewmr7_1629 from Shewanella sp. (strain MR-7).